The chain runs to 248 residues: (2S)-[(R)-hydroxy(phenyl)methyl]succinyl-CoA dehydrogenase subunit BbsD (248 aa).

Positions 15, 36, 62, 63, 89, 153, and 157 each coordinate NAD(+). Tyr-153 (proton acceptor) is an active-site residue.

The protein belongs to the short-chain dehydrogenases/reductases (SDR) family. Heterotetramer composed of 2 inactive BbsC subunits and 2 active BbsD subunits.

It carries out the reaction (2S)-[(R)-hydroxy(phenyl)methyl]succinyl-CoA + NAD(+) = (S)-2-benzoylsuccinyl-CoA + NADH + H(+). It functions in the pathway xenobiotic degradation; toluene degradation. With respect to regulation, activity is probably regulated by the inactive BbsC subunit. In terms of biological role, involved in an anaerobic toluene degradation pathway. Active subunit that catalyzes the oxidation of 2-(alpha-hydroxybenzyl)succinyl-CoA to 2-benzoylsuccinyl-CoA. In vitro, can catalyze the NADH-dependent reduction of the artificial substrates 2,2-dichloroacetophene and 2,4'-dichloroacetophenone. This Thauera aromatica protein is (2S)-[(R)-hydroxy(phenyl)methyl]succinyl-CoA dehydrogenase subunit BbsD.